Consider the following 69-residue polypeptide: Cytochrome c oxidase subunit 8A, mitochondrial (69 aa).

The N-terminal 25 residues, 1–25, are a transit peptide targeting the mitochondrion; the sequence is MSVLTPLLLRGLTGSARRLPVPRAK. The SIFI-degron motif lies at 2–19; that stretch reads SVLTPLLLRGLTGSARRL. The Mitochondrial matrix portion of the chain corresponds to 26–36; sequence IHSLPPDEKLG. The chain crosses the membrane as a helical span at residues 37-60; sequence IMELAVGLTSCFVTFLLPAGWILS. Residues 61–69 are Mitochondrial intermembrane-facing; that stretch reads HLETYRRPE.

This sequence belongs to the cytochrome c oxidase VIII family. Component of the cytochrome c oxidase (complex IV, CIV), a multisubunit enzyme composed of 14 subunits. The complex is composed of a catalytic core of 3 subunits MT-CO1, MT-CO2 and MT-CO3, encoded in the mitochondrial DNA, and 11 supernumerary subunits COX4I, COX5A, COX5B, COX6A, COX6B, COX6C, COX7A, COX7B, COX7C, COX8 and NDUFA4, which are encoded in the nuclear genome. The complex exists as a monomer or a dimer and forms supercomplexes (SCs) in the inner mitochondrial membrane with NADH-ubiquinone oxidoreductase (complex I, CI) and ubiquinol-cytochrome c oxidoreductase (cytochrome b-c1 complex, complex III, CIII), resulting in different assemblies (supercomplex SCI(1)III(2)IV(1) and megacomplex MCI(2)III(2)IV(2)). In terms of processing, in response to mitochondrial stress, the precursor protein is ubiquitinated by the SIFI complex in the cytoplasm before mitochondrial import, leading to its degradation. Within the SIFI complex, UBR4 initiates ubiquitin chain that are further elongated or branched by KCMF1.

It localises to the mitochondrion inner membrane. Its pathway is energy metabolism; oxidative phosphorylation. Component of the cytochrome c oxidase, the last enzyme in the mitochondrial electron transport chain which drives oxidative phosphorylation. The respiratory chain contains 3 multisubunit complexes succinate dehydrogenase (complex II, CII), ubiquinol-cytochrome c oxidoreductase (cytochrome b-c1 complex, complex III, CIII) and cytochrome c oxidase (complex IV, CIV), that cooperate to transfer electrons derived from NADH and succinate to molecular oxygen, creating an electrochemical gradient over the inner membrane that drives transmembrane transport and the ATP synthase. Cytochrome c oxidase is the component of the respiratory chain that catalyzes the reduction of oxygen to water. Electrons originating from reduced cytochrome c in the intermembrane space (IMS) are transferred via the dinuclear copper A center (CU(A)) of subunit 2 and heme A of subunit 1 to the active site in subunit 1, a binuclear center (BNC) formed by heme A3 and copper B (CU(B)). The BNC reduces molecular oxygen to 2 water molecules using 4 electrons from cytochrome c in the IMS and 4 protons from the mitochondrial matrix. The chain is Cytochrome c oxidase subunit 8A, mitochondrial (COX8A) from Gorilla gorilla gorilla (Western lowland gorilla).